Consider the following 289-residue polypeptide: Diaminopimelate epimerase (289 aa).

Substrate is bound by residues Asn11 and Asn78. The Proton donor role is filled by Cys87. Substrate is bound by residues 88–89 (GN), Asn163, Asn199, and 217–218 (ER). The active-site Proton acceptor is Cys226. 227–228 (GT) is a binding site for substrate.

Belongs to the diaminopimelate epimerase family. In terms of assembly, homodimer.

The protein localises to the cytoplasm. The enzyme catalyses (2S,6S)-2,6-diaminopimelate = meso-2,6-diaminopimelate. It functions in the pathway amino-acid biosynthesis; L-lysine biosynthesis via DAP pathway; DL-2,6-diaminopimelate from LL-2,6-diaminopimelate: step 1/1. Its function is as follows. Catalyzes the stereoinversion of LL-2,6-diaminopimelate (L,L-DAP) to meso-diaminopimelate (meso-DAP), a precursor of L-lysine and an essential component of the bacterial peptidoglycan. The protein is Diaminopimelate epimerase of Mycolicibacterium vanbaalenii (strain DSM 7251 / JCM 13017 / BCRC 16820 / KCTC 9966 / NRRL B-24157 / PYR-1) (Mycobacterium vanbaalenii).